The following is a 662-amino-acid chain: 3',5'-cyclic-AMP phosphodiesterase, isoform F (662 aa).

2 disordered regions span residues Val-79 to Gly-108 and Ser-207 to Thr-245. The segment covering Pro-80–Gly-98 has biased composition (polar residues). A PDEase domain is found at Val-248 to Ser-577. Residue His-324 is the Proton donor of the active site. Residue His-324–His-328 coordinates 3',5'-cyclic AMP. Positions 328, 364, 365, and 482 each coordinate a divalent metal cation. Residues Asp-365, Asp-482, and Gln-533 each contribute to the 3',5'-cyclic AMP site. Residues Glu-599–Gly-616 are compositionally biased toward acidic residues. A disordered region spans residues Glu-599–Met-662. The span at Gly-617–Ser-634 shows a compositional bias: low complexity. Over residues Gly-635–Met-646 the composition is skewed to gly residues. Over residues Gly-652 to Met-662 the composition is skewed to polar residues.

Belongs to the cyclic nucleotide phosphodiesterase family. PDE4 subfamily. As to quaternary structure, monomer. A divalent metal cation is required as a cofactor.

It catalyses the reaction 3',5'-cyclic AMP + H2O = AMP + H(+). It functions in the pathway purine metabolism; 3',5'-cyclic AMP degradation; AMP from 3',5'-cyclic AMP: step 1/1. Hydrolyzes the second messenger cAMP, which is a key regulator of many important physiological processes. Vital for female fertility. Required for learning/memory. This chain is 3',5'-cyclic-AMP phosphodiesterase, isoform F, found in Drosophila melanogaster (Fruit fly).